We begin with the raw amino-acid sequence, 189 residues long: Fine tangled pili major subunit (189 aa).

The protein belongs to the Dps family. In terms of assembly, hexamer.

The protein localises to the fimbrium. May contribute to bacterial adherence, or be involved in the protection of the bacteria, or both. In Haemophilus ducreyi (strain 35000HP / ATCC 700724), this protein is Fine tangled pili major subunit (ftpA).